A 351-amino-acid polypeptide reads, in one-letter code: Auxin efflux carrier component 5 (351 aa).

10 consecutive transmembrane segments (helical) span residues 7 to 27 (VYKVIEAMVPLYVALILGYGS), 39 to 59 (CDAINRLVCYFTLPLFTIEFT), 71 to 91 (FIAADVLSKVIIVTVLALWAK), 100 to 120 (WSITSFSLCTLTNSLVVGVPL), 132 to 152 (LVVQSSVFQAIVWLTLLLFVL), 210 to 230 (ILGIAWAFISNRWHLELPGIL), 234 to 254 (ILIMSKAGTGTAMFNMGIFMA), 271 to 291 (MVLKFIAGPAAMAIGSIVLGL), 295 to 315 (VLRVAIIQAALPQSITSFIFA), and 329 to 349 (VIFGMLVSLPVLVAYYAALEF).

Belongs to the auxin efflux carrier (TC 2.A.69.1) family. In terms of tissue distribution, expressed in elongating parts of hypocotyl, cotyledon vasculature and guard cells. Detected in root pericycle and root tip and at later developmental stages in leaves, stems and flowers. Expressed in veins of mature leaves.

Its subcellular location is the endoplasmic reticulum membrane. The protein localises to the cell membrane. Its function is as follows. Auxin transporter regulating intracellular auxin homeostasis and metabolism. Mediates the auxin transport from the cytosol into the lumen of the endoplasmic reticulum. May also act as an auxin efflux carrier when located to the cell membrane. PIN5 and PIN8 may have an antagonistic/compensatory activity. Involved in unfolded protein response (UPR) activation. Involved in the control of vein patterning. Promotes vein formation. PIN5, PIN6, and PIN8 control vein network geometry, but they are expressed in mutually exclusive domains of leaf vascular cells. The chain is Auxin efflux carrier component 5 from Arabidopsis thaliana (Mouse-ear cress).